Consider the following 2325-residue polypeptide: Otogelin-like protein (2325 aa).

Positions 1–22 (MVPWRALSLPILLVSLRGYVCA) are cleaved as a signal peptide. The VWFD 1 domain maps to 112-288 (GICKTWGQYH…VLTPDDTKCV (177 aa)). Disulfide bonds link Cys-114–Cys-248 and Cys-136–Cys-287. Asn-425 carries N-linked (GlcNAc...) asparagine glycosylation. The VWFD 2 domain maps to 472-645 (VQCSVVGDSH…HAWRVSSTCF (174 aa)). 3 disulfides stabilise this stretch: Cys-474–Cys-609, Cys-496–Cys-644, and Cys-518–Cys-526. One can recognise a TIL 1 domain in the interval 736 to 791 (CQKGMLYHHCSSLCLRSCTSLSSPEQCKDDCAEGCNCPEGKFYEETLNFCVPIYHC). Asn-817 and Asn-867 each carry an N-linked (GlcNAc...) asparagine glycan. The VWFD 3 domain occupies 937–1114 (AVCTVYGDRH…DLMEALKPCE (178 aa)). Disulfide bonds link Cys-939–Cys-1069, Cys-961–Cys-1113, and Cys-983–Cys-990. An N-linked (GlcNAc...) asparagine glycan is attached at Asn-1280. Residues 1366–1418 (RYEPCATPCFKTCSDPEALACTFLPPVEGCLPYCPKNMILDETTLKCVHPEDC) enclose the TIL 2 domain. A VWFD 4 domain is found at 1506–1695 (CRCSMLSELS…SWEIEKSFEV (190 aa)). 2 disulfide bridges follow: Cys-1508–Cys-1655 and Cys-1549–Cys-1571. 2 N-linked (GlcNAc...) asparagine glycosylation sites follow: Asn-1576 and Asn-2170. 4 disulfide bridges follow: Cys-2233–Cys-2289, Cys-2254–Cys-2303, Cys-2265–Cys-2320, and Cys-2269–Cys-2322. In terms of domain architecture, CTCK spans 2233 to 2325 (CKREERICQK…EPIDCTCQWN (93 aa)). Asn-2296 carries N-linked (GlcNAc...) asparagine glycosylation.

The protein belongs to the otogelin family.

The protein localises to the secreted. The polypeptide is Otogelin-like protein (Otogl) (Mus musculus (Mouse)).